A 312-amino-acid chain; its full sequence is Heterotepalin-4 (312 aa).

Positions M1–A22 are cleaved as a signal peptide. Cystine bridges form between C56/C280 and C107/C128. Residue E197 is part of the active site. The propeptide occupies Y284–F312.

It carries out the reaction Endohydrolysis of the N-glycosidic bond at one specific adenosine on the 28S rRNA.. Functionally, inhibits protein synthesis in vitro. In Phytolacca heterotepala (Mexican pokeweed), this protein is Heterotepalin-4.